Here is a 258-residue protein sequence, read N- to C-terminus: Enterotoxin type G (258 aa).

The N-terminal stretch at Met1–Ala25 is a signal peptide. Cys116 and Cys133 are oxidised to a cystine.

The protein belongs to the staphylococcal/streptococcal toxin family.

It localises to the secreted. Its function is as follows. Staphylococcal enterotoxins cause the intoxication staphylococcal food poisoning syndrome. The illness is characterized by high fever, hypotension, diarrhea, shock, and in some cases death. This chain is Enterotoxin type G (entG), found in Staphylococcus aureus (strain N315).